Here is a 254-residue protein sequence, read N- to C-terminus: Claudin-16 (254 aa).

Topologically, residues 1-22 (MGPGLAASHVSFPDSLLAKMRD) are cytoplasmic. A helical membrane pass occupies residues 23-43 (LLQYVACFFAFFSAGFLVVAT). Topologically, residues 44–98 (WTDCWMVNADDSLEVSTKCRGLWWECVTNAFDGIRTCDEYDSILAEHSLKLVVTR) are extracellular. The chain crosses the membrane as a helical span at residues 99-119 (ALMITADILAGFGFITLLLGL). Residues 120–134 (DCVKFLPDEPYIKVR) lie on the Cytoplasmic side of the membrane. A helical transmembrane segment spans residues 135–155 (ISFVAGTTLLIAGAPGIIGSV). The Extracellular portion of the chain corresponds to 156–188 (WYAVDVYVERSSLVLHNIFLGIQYKFGWSCWLG). The chain crosses the membrane as a helical span at residues 189–209 (MAGSLGCFLAGAILTCCLYLF). Over 210-254 (KDVGPERSYPYSTRKAYSTTAVSMPRSHAIPRTQTAKMYAVDTRV) the chain is Cytoplasmic. The short motif at 252–254 (TRV) is the Interaction with TJP1 element.

This sequence belongs to the claudin family. In terms of assembly, can form heteropolymeric tight junction strands with other claudins. Interacts with CLDN19. Interacts (via PDZ-binding motif TRV) with TJP1 (via PDZ domain). Cannot form tight junction strands on its own. As to expression, expressed preferentially in kidney.

It is found in the cell junction. It localises to the tight junction. The protein resides in the cell membrane. The enzyme catalyses Mg(2+)(in) = Mg(2+)(out). It carries out the reaction Ca(2+)(in) = Ca(2+)(out). The catalysed reaction is Na(+)(in) = Na(+)(out). It catalyses the reaction K(+)(in) = K(+)(out). The enzyme catalyses Rb(+)(in) = Rb(+)(out). It carries out the reaction Cs(+)(in) = Cs(+)(out). The catalysed reaction is Li(+)(in) = Li(+)(out). Its function is as follows. Forms paracellular channels: coassembles with CLDN19 into tight junction strands with cation-selective channels through the strands, conveying epithelial permeability in a process known as paracellular tight junction permeability. Involved in the maintenance of ion gradients along the nephron. In the thick ascending limb (TAL) of Henle's loop, facilitates sodium paracellular permeability from the interstitial compartment to the lumen, contributing to the lumen-positive transepithelial potential that drives paracellular magnesium and calcium reabsorption. This chain is Claudin-16 (CLDN16), found in Bos taurus (Bovine).